We begin with the raw amino-acid sequence, 160 residues long: Transcription elongation factor GreA (160 aa).

Positions 1-31 form a coiled coil; sequence MAEKTYPMTLEEKEKLEKELEELKLVRRPEI.

This sequence belongs to the GreA/GreB family.

Necessary for efficient RNA polymerase transcription elongation past template-encoded arresting sites. The arresting sites in DNA have the property of trapping a certain fraction of elongating RNA polymerases that pass through, resulting in locked ternary complexes. Cleavage of the nascent transcript by cleavage factors such as GreA or GreB allows the resumption of elongation from the new 3'terminus. GreA releases sequences of 2 to 3 nucleotides. The sequence is that of Transcription elongation factor GreA from Streptococcus suis (strain 98HAH33).